The chain runs to 259 residues: Dihydroorotate dehydrogenase B (NAD(+)), electron transfer subunit (259 aa).

The FAD-binding FR-type domain maps to 2-102 (MQKQNMIVVN…LGPLGHGFPL (101 aa)). Residues 53 to 56 (RPIS), 70 to 72 (LYR), and 77 to 78 (GT) contribute to the FAD site. Residues Cys221, Cys226, Cys229, and Cys246 each coordinate [2Fe-2S] cluster.

Belongs to the PyrK family. Heterotetramer of 2 PyrK and 2 PyrD type B subunits. It depends on [2Fe-2S] cluster as a cofactor. The cofactor is FAD.

The protein operates within pyrimidine metabolism; UMP biosynthesis via de novo pathway; orotate from (S)-dihydroorotate (NAD(+) route): step 1/1. Responsible for channeling the electrons from the oxidation of dihydroorotate from the FMN redox center in the PyrD type B subunit to the ultimate electron acceptor NAD(+). The chain is Dihydroorotate dehydrogenase B (NAD(+)), electron transfer subunit from Bacillus cereus (strain B4264).